The chain runs to 881 residues: Valine--tRNA ligase (881 aa).

Positions 76–86 match the 'HIGH' region motif; it reads PTVSGSLHIGH. Residues 493-526 are disordered; sequence DSPILPDESQLPVDPSSQAPEGYTEDQRGKPGGF. The 'KMSKS' region signature appears at 608-612; sequence KMSKS. Residue K611 coordinates ATP.

The protein belongs to the class-I aminoacyl-tRNA synthetase family. ValS type 2 subfamily. In terms of assembly, monomer.

The protein localises to the cytoplasm. It catalyses the reaction tRNA(Val) + L-valine + ATP = L-valyl-tRNA(Val) + AMP + diphosphate. Its function is as follows. Catalyzes the attachment of valine to tRNA(Val). As ValRS can inadvertently accommodate and process structurally similar amino acids such as threonine, to avoid such errors, it has a 'posttransfer' editing activity that hydrolyzes mischarged Thr-tRNA(Val) in a tRNA-dependent manner. This chain is Valine--tRNA ligase, found in Thermobifida fusca (strain YX).